Consider the following 108-residue polypeptide: uncharacterized protein (108 aa).

This is an uncharacterized protein from Autographa californica nuclear polyhedrosis virus (AcMNPV).